We begin with the raw amino-acid sequence, 333 residues long: BRISC and BRCA1-A complex member 1 (333 aa).

Met1 carries the post-translational modification N-acetylmethionine. Residues 1-85 (MEVAEANSPT…PWQVPASASE (85 aa)) form a disordered region. Ser8 is subject to Phosphoserine. A compositionally biased stretch (acidic residues) spans 10-24 (TEEEEEEEEEGEETI). A phosphoserine mark is found at Ser33 and Ser53. Over residues 58–67 (EAATADGGAA) the composition is skewed to low complexity. Positions 99 to 302 (VIICLDLSEE…LELHNCMAKL (204 aa)) are VWFA-like.

It belongs to the BABAM1 family. As to quaternary structure, component of the ARISC complex, at least composed of UIMC1/RAP80, ABRAXAS1, BRCC3/BRCC36, BABAM2 and BABAM1/NBA1. Component of the BRCA1-A complex, at least composed of BRCA1, BARD1, UIMC1/RAP80, ABRAXAS1, BRCC3/BRCC36, BABAM2 and BABAM1/NBA1. In the BRCA1-A complex, interacts directly with ABRAXAS1 and BABAM2. Component of the BRISC complex, at least composed of ABRAXAS2, BRCC3/BRCC36, BABAM2 and BABAM1/NBA1. Identified in a complex with SHMT2 and the other subunits of the BRISC complex.

It localises to the cytoplasm. It is found in the nucleus. Component of the BRCA1-A complex, a complex that specifically recognizes 'Lys-63'-linked ubiquitinated histones H2A and H2AX at DNA lesions sites, leading to target the BRCA1-BARD1 heterodimer to sites of DNA damage at double-strand breaks (DSBs). The BRCA1-A complex also possesses deubiquitinase activity that specifically removes 'Lys-63'-linked ubiquitin on histones H2A and H2AX. In the BRCA1-A complex, it is required for the complex integrity and its localization at DSBs. Component of the BRISC complex, a multiprotein complex that specifically cleaves 'Lys-63'-linked ubiquitin in various substrates. In these 2 complexes, it is probably required to maintain the stability of BABAM2 and help the 'Lys-63'-linked deubiquitinase activity mediated by BRCC3/BRCC36 component. The BRISC complex is required for normal mitotic spindle assembly and microtubule attachment to kinetochores via its role in deubiquitinating NUMA1. Plays a role in interferon signaling via its role in the deubiquitination of the interferon receptor IFNAR1; deubiquitination increases IFNAR1 activity by enhancing its stability and cell surface expression. Down-regulates the response to bacterial lipopolysaccharide (LPS) via its role in IFNAR1 deubiquitination. This is BRISC and BRCA1-A complex member 1 (Babam1) from Mus musculus (Mouse).